A 117-amino-acid chain; its full sequence is Large ribosomal subunit protein bL19 (117 aa).

The protein belongs to the bacterial ribosomal protein bL19 family.

Its function is as follows. This protein is located at the 30S-50S ribosomal subunit interface and may play a role in the structure and function of the aminoacyl-tRNA binding site. The polypeptide is Large ribosomal subunit protein bL19 (Alkaliphilus metalliredigens (strain QYMF)).